The chain runs to 292 residues: Early E4 34 kDa protein (292 aa).

The protein belongs to the adenoviridae E4 30 to 34 kDa protein family. Interacts with E1B-55k.

It is found in the host nucleus. The protein localises to the host cytoplasm. Its function is as follows. Plays a major role to prevent cellular inhibition of viral genome replication by nuclear bodies. Assembles an SCF-like E3 ubiquitin ligase complex based on the cellular proteins ELOB, ELOC, CUL5 and RBX1, in cooperation with viral E1B-55K. This viral RING-type ligase ubiquitinates cellular substrates prior to proteasomal degradation: p53/TP53, LIG4, MRE11-RAD50-NBS1 (MRN) complex, ITGA3, DAXX and BLM. This chain is Early E4 34 kDa protein, found in Human adenovirus D serotype 9 (HAdV-9).